The following is a 120-amino-acid chain: NAD(P)H-quinone oxidoreductase subunit 3, chloroplastic (120 aa).

3 consecutive transmembrane segments (helical) span residues 9 to 29 (IFWA…LISG), 64 to 84 (MFAL…PWAM), and 88 to 108 (VLGV…IVGS).

It belongs to the complex I subunit 3 family. In terms of assembly, NDH is composed of at least 16 different subunits, 5 of which are encoded in the nucleus.

The protein localises to the plastid. It is found in the chloroplast thylakoid membrane. It carries out the reaction a plastoquinone + NADH + (n+1) H(+)(in) = a plastoquinol + NAD(+) + n H(+)(out). The enzyme catalyses a plastoquinone + NADPH + (n+1) H(+)(in) = a plastoquinol + NADP(+) + n H(+)(out). In terms of biological role, NDH shuttles electrons from NAD(P)H:plastoquinone, via FMN and iron-sulfur (Fe-S) centers, to quinones in the photosynthetic chain and possibly in a chloroplast respiratory chain. The immediate electron acceptor for the enzyme in this species is believed to be plastoquinone. Couples the redox reaction to proton translocation, and thus conserves the redox energy in a proton gradient. The chain is NAD(P)H-quinone oxidoreductase subunit 3, chloroplastic from Phaseolus vulgaris (Kidney bean).